We begin with the raw amino-acid sequence, 440 residues long: Beta-1,3-galactosyl-O-glycosyl-glycoprotein beta-1,6-N-acetylglucosaminyltransferase (440 aa).

Residues 1-12 are Cytoplasmic-facing; sequence MKMAGWKKKLCR. A helical; Signal-anchor for type II membrane protein transmembrane segment spans residues 13–30; sequence GHHLWALGCYMLLAVVSL. Residues 31 to 440 are Lumenal-facing; sequence RLSLRFKCDV…RHKAIYGTEL (410 aa). N-linked (GlcNAc...) asparagine; by host glycans are attached at residues Asn-72 and Asn-108. 4 cysteine pairs are disulfide-bonded: Cys-73–Cys-230, Cys-164–Cys-384, Cys-185–Cys-212, and Cys-393–Cys-425.

The protein belongs to the glycosyltransferase 14 family.

The protein localises to the host Golgi apparatus membrane. The catalysed reaction is a 3-O-[beta-D-galactosyl-(1-&gt;3)-N-acetyl-alpha-D-galactosaminyl]-L-seryl-[protein] + UDP-N-acetyl-alpha-D-glucosamine = 3-O-{beta-D-galactosyl-(1-&gt;3)-[N-acetyl-beta-D-glucosaminyl-(1-&gt;6)]-N-acetyl-alpha-D-galactosaminyl}-L-seryl-[protein] + UDP + H(+). It catalyses the reaction a 3-O-[beta-D-galactosyl-(1-&gt;3)-N-acetyl-alpha-D-galactosaminyl]-L-threonyl-[protein] + UDP-N-acetyl-alpha-D-glucosamine = a 3-O-{beta-D-galactosyl-(1-&gt;3)-[N-acetyl-beta-D-glucosaminyl-(1-&gt;6)]-N-acetyl-alpha-D-galactosaminyl}-L-threonyl-[protein] + UDP + H(+). It carries out the reaction a beta-D-Gal-(1-&gt;4)-beta-D-GlcNAc-(1-&gt;3)-beta-D-Gal-(1-&gt;4)-beta-D-GlcNAc derivative + UDP-N-acetyl-alpha-D-glucosamine = a beta-D-Gal-(1-&gt;4)-beta-D-GlcNAc-(1-&gt;3)-[beta-D-GlcNAc-(1-&gt;6)]-beta-D-Gal-(1-&gt;4)-N-acetyl-beta-D-glucosaminyl derivative + UDP + H(+). The enzyme catalyses 3-O-[N-acetyl-beta-D-glucosaminyl-(1-&gt;3)-N-acetyl-alpha-D-galactosaminyl]-L-seryl-[protein] + UDP-N-acetyl-alpha-D-glucosamine = 3-O-[N-acetyl-beta-D-glucosaminyl-(1-&gt;3)-[N-acetyl-beta-D-glucosaminyl-(1-&gt;6)]-N-acetyl-alpha-D-galactosaminyl]-L-seryl-[protein] + UDP + H(+). The catalysed reaction is a 3-O-[N-acetyl-beta-D-glucosaminyl-(1-&gt;3)-N-acetyl-alpha-D-galactosaminyl]-L-threonyl-[protein] + UDP-N-acetyl-alpha-D-glucosamine = 3-O-[N-acetyl-beta-D-glucosaminyl-(1-&gt;3)-[N-acetyl-beta-D-glucosaminyl-(1-&gt;6)]-N-acetyl-alpha-D-galactosaminyl]-L-threonyl-[protein] + UDP + H(+). The protein operates within protein modification; protein glycosylation. In terms of biological role, non-essential glycosyltransferase that can synthesize all known mucin beta 6 N-acetylglucosaminides. Mediates core 2 and core 4 O-glycan branching, 2 important steps in mucin-type biosynthesis. Has also I-branching enzyme activity by converting linear into branched poly-N-acetyllactosaminoglycans. Contributes to the post-translational modifications of structural proteins. This Bos taurus (Bovine) protein is Beta-1,3-galactosyl-O-glycosyl-glycoprotein beta-1,6-N-acetylglucosaminyltransferase (Bo17).